Here is a 357-residue protein sequence, read N- to C-terminus: Glucose-6-phosphatase catalytic subunit 1 (357 aa).

At 1 to 28 (MEKGMDVLHDFGIQSTHYLQVNYQDSQD) the chain is on the lumenal side. Residues 29–49 (WFILVSVIADLRNAFYVLFPI) form a helical membrane-spanning segment. Topologically, residues 50–60 (WFHLREAVGIK) are cytoplasmic. A helical transmembrane segment spans residues 61-81 (LLWVAVIGDWLNLVFKWILFG). Residues 82–117 (QRPYWWVMDTDYYSNTSVPLIKQFPVTCETGPGSPS) are Lumenal-facing. Arginine 83 contributes to the substrate binding site. N-linked (GlcNAc...) asparagine glycosylation is present at asparagine 96. A helical transmembrane segment spans residues 118–138 (GHAMGTAGVYYVMVTSTLSIF). The active-site Proton donor is the histidine 119. Residues 139–147 (RGRKRPTYR) lie on the Cytoplasmic side of the membrane. Residues 148 to 168 (FRCLNILLWLGFWAVQLNVCL) form a helical membrane-spanning segment. Residues 169-170 (SR) lie on the Lumenal side of the membrane. Residue arginine 170 coordinates substrate. The chain crosses the membrane as a helical span at residues 171–191 (IYLAAHFPHQVVAGVLSGIAV). Residue histidine 176 is the Nucleophile of the active site. Topologically, residues 192-209 (AETFRHIQSIYNASLKKY) are cytoplasmic. The helical transmembrane segment at 210–230 (FLITFFLFSFAIGFYLLLKGL) threads the bilayer. Residues 231–254 (GVDLLWTLEKARRWCERPEWVHID) lie on the Lumenal side of the membrane. Residues 255 to 275 (TTPFASLLKNVGTLFGLGVTL) traverse the membrane as a helical segment. Residues 276 to 291 (NSSMYRESCKGKLSKW) lie on the Cytoplasmic side of the membrane. A helical transmembrane segment spans residues 292–312 (FPFRLSCIVVSLILLHLFDSL). Residues 313-320 (KPPSQTEL) lie on the Lumenal side of the membrane. A helical transmembrane segment spans residues 321–341 (IFYTLSFCKSAAVPLASVSLI). Residues 342 to 357 (PYCLARVFDQPDKKSL) lie on the Cytoplasmic side of the membrane. The Prevents secretion from ER signature appears at 354–357 (KKSL).

This sequence belongs to the glucose-6-phosphatase family.

The protein resides in the endoplasmic reticulum membrane. The enzyme catalyses D-glucose 6-phosphate + H2O = D-glucose + phosphate. The protein operates within carbohydrate biosynthesis; gluconeogenesis. Functionally, hydrolyzes glucose-6-phosphate to glucose in the endoplasmic reticulum. Forms with the glucose-6-phosphate transporter (SLC37A4/G6PT) the complex responsible for glucose production in the terminal step of glycogenolysis and gluconeogenesis. Hence, it is the key enzyme in homeostatic regulation of blood glucose levels. The polypeptide is Glucose-6-phosphatase catalytic subunit 1 (G6PC1) (Canis lupus familiaris (Dog)).